Reading from the N-terminus, the 388-residue chain is Chorismate synthase (388 aa).

Residues Arg-39 and Arg-45 each coordinate NADP(+). The tract at residues 95-118 is disordered; the sequence is EKNEKSRRVSRPRPGHADLVGGMK. Residues 130 to 132, 251 to 252, Gly-296, 311 to 315, and Arg-337 contribute to the FMN site; these read RSS, NA, and KPIPT.

Belongs to the chorismate synthase family. In terms of assembly, homotetramer. It depends on FMNH2 as a cofactor.

It carries out the reaction 5-O-(1-carboxyvinyl)-3-phosphoshikimate = chorismate + phosphate. It functions in the pathway metabolic intermediate biosynthesis; chorismate biosynthesis; chorismate from D-erythrose 4-phosphate and phosphoenolpyruvate: step 7/7. Its function is as follows. Catalyzes the anti-1,4-elimination of the C-3 phosphate and the C-6 proR hydrogen from 5-enolpyruvylshikimate-3-phosphate (EPSP) to yield chorismate, which is the branch point compound that serves as the starting substrate for the three terminal pathways of aromatic amino acid biosynthesis. This reaction introduces a second double bond into the aromatic ring system. The sequence is that of Chorismate synthase from Listeria welshimeri serovar 6b (strain ATCC 35897 / DSM 20650 / CCUG 15529 / CIP 8149 / NCTC 11857 / SLCC 5334 / V8).